A 616-amino-acid chain; its full sequence is Spastin (616 aa).

Positions 1 to 44 (MNSPGGRGKKKGSGGPSSPVPPRPPPPCLASSRPAPRPAPPPQS) are disordered. The segment at 1 to 50 (MNSPGGRGKKKGSGGPSSPVPPRPPPPCLASSRPAPRPAPPPQSPHKRNL) is required for nuclear localization. Residues 1–56 (MNSPGGRGKKKGSGGPSSPVPPRPPPPCLASSRPAPRPAPPPQSPHKRNLYYFSYP) lie on the Cytoplasmic side of the membrane. Positions 1-80 (MNSPGGRGKK…LGLLFVWLCQ (80 aa)) are required for interaction with ATL1. Positions 1 to 194 (MNSPGGRGKK…LVMAKDRLQL (194 aa)) are required for midbody localization. The required for interaction with RTN1 stretch occupies residues 1-300 (MNSPGGRGKK…STPKTNRTNK (300 aa)). The short motif at 4 to 11 (PGGRGKKK) is the Nuclear localization signal element. 2 stretches are compositionally biased toward pro residues: residues 18 to 28 (SPVPPRPPPPC) and 35 to 44 (APRPAPPPQS). A required for interaction with SSNA1 and microtubules region spans residues 50 to 87 (LYYFSYPLFLGFALLRLVAFHLGLLFVWLCQRFSRALM). Positions 57-77 (LFLGFALLRLVAFHLGLLFVW) form an intramembrane region, helical. Residues 59–67 (LGFALLRLV) carry the Nuclear export signal motif. Residues 78-616 (LCQRFSRALM…WNKDFGDTTV (539 aa)) are Cytoplasmic-facing. Residues 112–196 (EVERVRAFHK…MAKDRLQLLE (85 aa)) form a sufficient for interaction with CHMP1B region. The segment at 114 to 200 (ERVRAFHKQA…RLQLLEKLQP (87 aa)) is required for interaction with microtubules. In terms of domain architecture, MIT spans 120 to 195 (HKQAFEYISV…VMAKDRLQLL (76 aa)). The segment at 223 to 266 (GHLQSESGAVPKRKDPLTHPSNSLPRSKAIMKTGSTGLSGHHRA) is disordered. The sufficient for interaction with microtubules stretch occupies residues 226-328 (QSESGAVPKR…NVDSNLANFI (103 aa)). Residues 228–616 (ESGAVPKRKD…WNKDFGDTTV (389 aa)) are sufficient for microtubule severing. Residues Ser245 and Ser268 each carry the phosphoserine modification. Residues 270 to 328 (SGLSIVSGMRQGPGPTTATHKSTPKTNRTNKPSTPTTAPRKKKDLKNFRNVDSNLANFI) are required for interaction with microtubules and microtubule severing. The tract at residues 278–311 (MRQGPGPTTATHKSTPKTNRTNKPSTPTTAPRKK) is disordered. Residues 283–306 (GPTTATHKSTPKTNRTNKPSTPTT) are compositionally biased toward polar residues. The residue at position 306 (Thr306) is a Phosphothreonine. The Nuclear localization signal signature appears at 309–312 (RKKK). Residues 310 to 312 (KKK) form a required for interaction with microtubules region. Position 382-389 (382-389 (GPPGNGKT)) interacts with ATP. The residue at position 597 (Ser597) is a Phosphoserine.

This sequence belongs to the AAA ATPase family. Spastin subfamily. Homohexamer. Mostly monomeric, but assembles into hexameric structure for short periods of time. Oligomerization seems to be a prerequisite for catalytic activity. Binding to ATP in a cleft between two adjacent subunits stabilizes the homohexameric form. Binds to microtubules at least in part via the alpha-tubulin and beta-tubulin tails. The hexamer adopts a ring conformation through which microtubules pass prior to being severed. Does not interact strongly with tubulin heterodimers. Interacts (via MIT domain) with CHMP1B; the interaction is direct. Interacts with SSNA1. Interacts with ATL1. Interacts with RTN1. Interacts with ZFYVE27. Interacts with REEP1. Interacts (via MIT domain) with IST1.

It is found in the membrane. The protein localises to the endoplasmic reticulum. The protein resides in the midbody. Its subcellular location is the cytoplasm. It localises to the cytoskeleton. It is found in the microtubule organizing center. The protein localises to the centrosome. The protein resides in the perinuclear region. Its subcellular location is the nucleus. It localises to the spindle. It is found in the cell projection. The protein localises to the axon. It carries out the reaction n ATP + n H2O + a microtubule = n ADP + n phosphate + (n+1) alpha/beta tubulin heterodimers.. Its activity is regulated as follows. Allosteric enzyme with a cooperative mechanism; at least two neighbor subunits influence each other strongly in spastin hexamers. Microtubule binding promotes cooperative interactions among spastin subunits. Functionally, ATP-dependent microtubule severing protein that specifically recognizes and cuts microtubules that are polyglutamylated. Preferentially recognizes and acts on microtubules decorated with short polyglutamate tails: severing activity increases as the number of glutamates per tubulin rises from one to eight, but decreases beyond this glutamylation threshold. Severing activity is not dependent on tubulin acetylation or detyrosination. Microtubule severing promotes reorganization of cellular microtubule arrays and the release of microtubules from the centrosome following nucleation. It is critical for the biogenesis and maintenance of complex microtubule arrays in axons, spindles and cilia. SPAST is involved in abscission step of cytokinesis and nuclear envelope reassembly during anaphase in cooperation with the ESCRT-III complex. Recruited at the midbody, probably by IST1, and participates in membrane fission during abscission together with the ESCRT-III complex. Recruited to the nuclear membrane by IST1 and mediates microtubule severing, promoting nuclear envelope sealing and mitotic spindle disassembly during late anaphase. Required for membrane traffic from the endoplasmic reticulum (ER) to the Golgi and endosome recycling. Recruited by IST1 to endosomes and regulates early endosomal tubulation and recycling by mediating microtubule severing. Probably plays a role in axon growth and the formation of axonal branches. In Sus scrofa (Pig), this protein is Spastin.